Consider the following 454-residue polypeptide: Isthmin-1 (454 aa).

The first 29 residues, 1–29 (MVRLAAELLLLLGLLLLTLHITVLRGSGA), serve as a signal peptide directing secretion. Disordered regions lie at residues 29–93 (ASDR…PRSF), 125–144 (PDSE…WSLP), and 161–209 (TNSG…STDG). Residues 38-55 (GNNNLNLESDSTSETSFP) show a composition bias toward polar residues. A compositionally biased stretch (basic and acidic residues) spans 128–137 (EAEKDQHPEN). The TSP type-1 domain maps to 208 to 252 (DGEGDWSLWSVCSVTCGNGNQKRTRSCGYACIATESRTCDRPNCP). 3 disulfides stabilise this stretch: cysteine 219–cysteine 246, cysteine 223–cysteine 251, and cysteine 234–cysteine 238. Residues 279 to 442 (LFEVDMDSCE…QKCTESPSDE (164 aa)) form the AMOP domain.

Belongs to the isthmin family. Interacts with integrin ITGAV/ITGB5.

It localises to the secreted. Acts as an angiogenesis inhibitor. The chain is Isthmin-1 (Ism1) from Mus musculus (Mouse).